We begin with the raw amino-acid sequence, 202 residues long: dITP/XTP pyrophosphatase (202 aa).

7–12 (SNNPGK) provides a ligand contact to substrate. Mg(2+)-binding residues include E39 and D68. D68 serves as the catalytic Proton acceptor. Substrate is bound by residues A69, 157–160 (FGFD), K180, and 185–186 (HR).

It belongs to the HAM1 NTPase family. As to quaternary structure, homodimer. Mg(2+) serves as cofactor.

The catalysed reaction is XTP + H2O = XMP + diphosphate + H(+). It carries out the reaction dITP + H2O = dIMP + diphosphate + H(+). It catalyses the reaction ITP + H2O = IMP + diphosphate + H(+). Functionally, pyrophosphatase that catalyzes the hydrolysis of nucleoside triphosphates to their monophosphate derivatives, with a high preference for the non-canonical purine nucleotides XTP (xanthosine triphosphate), dITP (deoxyinosine triphosphate) and ITP. Seems to function as a house-cleaning enzyme that removes non-canonical purine nucleotides from the nucleotide pool, thus preventing their incorporation into DNA/RNA and avoiding chromosomal lesions. This chain is dITP/XTP pyrophosphatase, found in Polaromonas naphthalenivorans (strain CJ2).